The following is a 424-amino-acid chain: MFS-type transporter opdF (424 aa).

Residues 1-10 (MSDTSLEKGN) show a composition bias toward basic and acidic residues. Positions 1–23 (MSDTSLEKGNEGPTAEAPKVAPP) are disordered. The next 5 membrane-spanning stretches (helical) occupy residues 36–56 (VAGA…IALF), 102–122 (VPIA…SLST), 127–147 (LMLS…TPAM), 160–180 (IVGG…PLMV), and 187–207 (VGFG…LVFA). Asparagine 208 is a glycosylation site (N-linked (GlcNAc...) asparagine). The next 6 membrane-spanning stretches (helical) occupy residues 239-259 (LCVA…YIVV), 265-285 (GMST…SFFG), 299-319 (FNVM…LWLP), 329-349 (FAAL…VLIV), 364-384 (VLAF…AIAA), and 391-411 (TYTC…LAAL).

This sequence belongs to the major facilitator superfamily. Monocarboxylate porter (TC 2.A.1.13) family.

Its subcellular location is the membrane. In terms of biological role, MFS-type transporter; part of the gene cluster that mediates the biosynthesis of oxopyrrolidines, polyketide-amino acid hybrid compounds with feature structures of tetramic acid. In Penicillium oxalicum (strain 114-2 / CGMCC 5302) (Penicillium decumbens), this protein is MFS-type transporter opdF.